We begin with the raw amino-acid sequence, 245 residues long: Gem-associated protein 2 (245 aa).

Belongs to the gemin-2 family. Component of the core survival motor neuron (SMN) complex composed of Smn, Gem2, Gem3, rig/Gem5 and one of 3 almost identical Gem4 paralogs encoded by Glos/Gem4a, Gem4b or Gem4c. Part of a minimal SMN complex composed of Smn and Gem2 only; this complex is active in UsnRNP assembly. The SMN complex associates with the entire set of spliceosomal snRNP Sm proteins, SmB, SmD1, SmD2, SmD3, SmE, SmF and SmG, and with the snRNP-specific proteins snRNP-U1-70K, U2A, snf/U1A and U5-116KD. In terms of tissue distribution, expressed in nurse cells and oocytes.

Its subcellular location is the cytoplasm. It is found in the U-body. Component of the survival motor neuron (SMN) complex that catalyzes the assembly of small nuclear ribonucleoproteins (snRNPs), the building blocks of the spliceosome, and thereby plays an important role in the splicing of cellular pre-mRNAs. Most spliceosomal snRNPs contain a common set of Sm proteins SNRPB, SNRPD1, SNRPD2, SNRPD3, SNRPE, SNRPF and SNRPG that assemble in a heptameric protein ring on the Sm site of the small nuclear RNA to form the core snRNP (Sm core). In the cytosol, the Sm proteins SNRPD1, SNRPD2, SNRPE, SNRPF and SNRPG (5Sm) are trapped in an inactive 6S pICln-Sm complex by the chaperone CLNS1A that controls the assembly of the core snRNP. To assemble core snRNPs, the SMN complex accepts the trapped 5Sm proteins from CLNS1A. Binding of snRNA inside 5Sm ultimately triggers eviction of the SMN complex, thereby allowing binding of SNRPD3 and SNRPB to complete assembly of the core snRNP. Within the SMN complex, GEMIN2 constrains the conformation of 5Sm, thereby promoting 5Sm binding to snRNA containing the snRNP code (a nonameric Sm site and a 3'-adjacent stem-loop), thus preventing progression of assembly until a cognate substrate is bound. Involved in adult motor function. In Drosophila melanogaster (Fruit fly), this protein is Gem-associated protein 2.